We begin with the raw amino-acid sequence, 71 residues long: Exodeoxyribonuclease 7 small subunit (71 aa).

This sequence belongs to the XseB family. In terms of assembly, heterooligomer composed of large and small subunits.

Its subcellular location is the cytoplasm. The enzyme catalyses Exonucleolytic cleavage in either 5'- to 3'- or 3'- to 5'-direction to yield nucleoside 5'-phosphates.. In terms of biological role, bidirectionally degrades single-stranded DNA into large acid-insoluble oligonucleotides, which are then degraded further into small acid-soluble oligonucleotides. In Streptococcus thermophilus (strain ATCC BAA-250 / LMG 18311), this protein is Exodeoxyribonuclease 7 small subunit.